The sequence spans 181 residues: Putative manganese efflux pump MntP (181 aa).

6 helical membrane passes run 5–25 (LIAL…IALG), 36–56 (MFKV…MGMV), 66–86 (GLFA…VMIV), 102–122 (IGLF…GLSL), 130–150 (ALAV…GLFI), and 158–178 (VGPY…VKLL).

The protein belongs to the MntP (TC 9.B.29) family.

It localises to the cell membrane. Its function is as follows. Probably functions as a manganese efflux pump. The sequence is that of Putative manganese efflux pump MntP from Halalkalibacterium halodurans (strain ATCC BAA-125 / DSM 18197 / FERM 7344 / JCM 9153 / C-125) (Bacillus halodurans).